The sequence spans 189 residues: Phosphoheptose isomerase (189 aa).

The SIS domain occupies 34-189 (LVAALKGGKK…CDLVEKGLFK (156 aa)). 49–51 (NGG) is a binding site for substrate. Residues His58 and Glu62 each contribute to the Zn(2+) site. Residues Glu62, 91–92 (ND), 117–119 (STS), Ser122, and Gln169 contribute to the substrate site. Zn(2+) is bound by residues Gln169 and His177.

It belongs to the SIS family. GmhA subfamily. In terms of assembly, homotetramer. Zn(2+) is required as a cofactor.

The protein localises to the cytoplasm. It carries out the reaction 2 D-sedoheptulose 7-phosphate = D-glycero-alpha-D-manno-heptose 7-phosphate + D-glycero-beta-D-manno-heptose 7-phosphate. It functions in the pathway carbohydrate biosynthesis; D-glycero-D-manno-heptose 7-phosphate biosynthesis; D-glycero-alpha-D-manno-heptose 7-phosphate and D-glycero-beta-D-manno-heptose 7-phosphate from sedoheptulose 7-phosphate: step 1/1. Functionally, catalyzes the isomerization of sedoheptulose 7-phosphate in D-glycero-D-manno-heptose 7-phosphate. This Geobacter metallireducens (strain ATCC 53774 / DSM 7210 / GS-15) protein is Phosphoheptose isomerase.